A 300-amino-acid chain; its full sequence is MKTGNQFKTVALVGRSNTPGIAEPLATLADSIATLGFEVVFEGDTAREIGIAGYPALTPAEIGARADVAIVLGGDGTMLGIGRQLAPYRTPLIGINHGRLGFITDIAASDMQALVPVMLAGKFEREERSLLEARIVRDGEPIYHALAFNDVVVNRSGFSGMVELRASVDGRYMYNQRSDGLIVATPTGSTAYALSSAGPILHPQLAGIVLVPIAPHALSNRPIVLPDDSKIAIQIVGGRDVNVNFDMQSFTSLELNDTIEVRRSKHTVPFLHPIGYSYYTTLRKKLHWNEHASNEDDKAS.

Residue D75 is the Proton acceptor of the active site. NAD(+) contacts are provided by residues 75 to 76, 149 to 150, R177, D179, 190 to 195, A214, and Q248; these read DG, ND, and TAYALS.

The protein belongs to the NAD kinase family. Requires a divalent metal cation as cofactor.

It localises to the cytoplasm. It catalyses the reaction NAD(+) + ATP = ADP + NADP(+) + H(+). Its function is as follows. Involved in the regulation of the intracellular balance of NAD and NADP, and is a key enzyme in the biosynthesis of NADP. Catalyzes specifically the phosphorylation on 2'-hydroxyl of the adenosine moiety of NAD to yield NADP. This chain is NAD kinase, found in Burkholderia orbicola (strain MC0-3).